Reading from the N-terminus, the 162-residue chain is Protein NrdI (162 aa).

Belongs to the NrdI family.

Functionally, probably involved in ribonucleotide reductase function. This Streptococcus pyogenes serotype M1 protein is Protein NrdI.